Consider the following 388-residue polypeptide: Norsolorinic acid reductase (388 aa).

The active-site Proton donor is the Tyr-74. 233-243 provides a ligand contact to NADP(+); that stretch reads GVLGRGQFRSA.

This sequence belongs to the aldo/keto reductase family. Aldo/keto reductase 2 subfamily.

Its pathway is mycotoxin biosynthesis; aflatoxin biosynthesis. The sequence is that of Norsolorinic acid reductase (norA) from Aspergillus flavus (strain ATCC 200026 / FGSC A1120 / IAM 13836 / NRRL 3357 / JCM 12722 / SRRC 167).